The primary structure comprises 109 residues: Large ribosomal subunit protein uL22 (109 aa).

This sequence belongs to the universal ribosomal protein uL22 family. In terms of assembly, part of the 50S ribosomal subunit.

Its function is as follows. This protein binds specifically to 23S rRNA; its binding is stimulated by other ribosomal proteins, e.g. L4, L17, and L20. It is important during the early stages of 50S assembly. It makes multiple contacts with different domains of the 23S rRNA in the assembled 50S subunit and ribosome. Functionally, the globular domain of the protein is located near the polypeptide exit tunnel on the outside of the subunit, while an extended beta-hairpin is found that lines the wall of the exit tunnel in the center of the 70S ribosome. The sequence is that of Large ribosomal subunit protein uL22 from Polynucleobacter asymbioticus (strain DSM 18221 / CIP 109841 / QLW-P1DMWA-1) (Polynucleobacter necessarius subsp. asymbioticus).